Reading from the N-terminus, the 807-residue chain is G-type lectin S-receptor-like serine/threonine-protein kinase At1g61420 (807 aa).

A signal peptide spans 1–24 (MGKKWIVFFAYLLLSSFFISSSSA). Residues 25–144 (GITKESPLPI…FSGRTLWQSF (120 aa)) form the Bulb-type lectin domain. Residues 25-426 (GITKESPLPI…ELGGNKRKKA (402 aa)) are Extracellular-facing. N53, N94, N117, N134, N236, and N267 each carry an N-linked (GlcNAc...) asparagine glycan. Residues 278 to 314 (PEHSCDYYGVCGPFGLCVKSVPPKCTCFKGFVPKLIE) enclose the EGF-like; atypical domain. Disulfide bonds link C282–C294 and C288–C302. Residues N320, N336, and N375 are each glycosylated (N-linked (GlcNAc...) asparagine). One can recognise a PAN domain in the interval 333-413 (CQGNSTGKYA…EGGELLSIRL (81 aa)). Intrachain disulfides connect C368/C389 and C372/C378. The chain crosses the membrane as a helical span at residues 427–447 (ITASIVSLSLVVIIAFVAFCF). At 448 to 807 (WRYRVKHNAD…EMTKSVILGR (360 aa)) the chain is on the cytoplasmic side. Residues 494–779 (FSISNKLGQG…DLPPPEQPTF (286 aa)) form the Protein kinase domain. ATP is bound by residues 500–508 (LGQGGFGPV) and K522. Residues S528 and S543 each carry the phosphoserine modification. A caM-binding region spans residues 583-600 (RKRLEIDWPKRLDIIQGI). The active-site Proton acceptor is the D619. 2 positions are modified to phosphoserine: S623 and S636. Residue T653 is modified to Phosphothreonine. S696 and S790 each carry phosphoserine.

The protein belongs to the protein kinase superfamily. Ser/Thr protein kinase family.

The protein localises to the cell membrane. It catalyses the reaction L-seryl-[protein] + ATP = O-phospho-L-seryl-[protein] + ADP + H(+). The catalysed reaction is L-threonyl-[protein] + ATP = O-phospho-L-threonyl-[protein] + ADP + H(+). This is G-type lectin S-receptor-like serine/threonine-protein kinase At1g61420 from Arabidopsis thaliana (Mouse-ear cress).